A 238-amino-acid chain; its full sequence is Ribonuclease PH (238 aa).

Residues Arg86 and 124–126 (GTR) each bind phosphate.

This sequence belongs to the RNase PH family. In terms of assembly, homohexameric ring arranged as a trimer of dimers.

The catalysed reaction is tRNA(n+1) + phosphate = tRNA(n) + a ribonucleoside 5'-diphosphate. Functionally, phosphorolytic 3'-5' exoribonuclease that plays an important role in tRNA 3'-end maturation. Removes nucleotide residues following the 3'-CCA terminus of tRNAs; can also add nucleotides to the ends of RNA molecules by using nucleoside diphosphates as substrates, but this may not be physiologically important. Probably plays a role in initiation of 16S rRNA degradation (leading to ribosome degradation) during starvation. This is Ribonuclease PH from Yersinia pseudotuberculosis serotype O:1b (strain IP 31758).